The chain runs to 467 residues: Asparagine--tRNA ligase (467 aa).

This sequence belongs to the class-II aminoacyl-tRNA synthetase family. As to quaternary structure, homodimer.

Its subcellular location is the cytoplasm. The catalysed reaction is tRNA(Asn) + L-asparagine + ATP = L-asparaginyl-tRNA(Asn) + AMP + diphosphate + H(+). The protein is Asparagine--tRNA ligase of Glaesserella parasuis serovar 5 (strain SH0165) (Haemophilus parasuis).